A 357-amino-acid polypeptide reads, in one-letter code: MIVLGIETSCDETGVALYNTIPWEEGKPAFQGILGQGLHSQIAMHRDYGGVVPELASRDHIRRVLPLLDESLAQSGLKLSDIDAVAFTQGPGLAGALLVGSAFAKSLAQGLNLPSIGVHHLEGHLLSPLLGQTAPQFPFIALLVSGGHTQLMKVSGIGQYKLLGETLDDAAGEAFDKTAKLLGLDYPGGAAISKLAEKGRPGIFDLPKPMLHSGDLDFSFSGLKTAVLNQTKKFTEKNIVGADEIAQFHADLARSFVDSIVAVLVSKSEKALKQTGCKHLVLAGGVGANLQLRAALNEKASRNGFEVHYPPLELCTDNGVMIAFAGALRMLAENNGSNTSGAFDIKPRWDLQSNNLK.

The Fe cation site is built by H120 and H124. Substrate is bound by residues 143-147 (LVSGG), D176, G189, and N289. D317 contacts Fe cation.

This sequence belongs to the KAE1 / TsaD family. The cofactor is Fe(2+).

The protein localises to the cytoplasm. It carries out the reaction L-threonylcarbamoyladenylate + adenosine(37) in tRNA = N(6)-L-threonylcarbamoyladenosine(37) in tRNA + AMP + H(+). Required for the formation of a threonylcarbamoyl group on adenosine at position 37 (t(6)A37) in tRNAs that read codons beginning with adenine. Is involved in the transfer of the threonylcarbamoyl moiety of threonylcarbamoyl-AMP (TC-AMP) to the N6 group of A37, together with TsaE and TsaB. TsaD likely plays a direct catalytic role in this reaction. This is tRNA N6-adenosine threonylcarbamoyltransferase from Polynucleobacter asymbioticus (strain DSM 18221 / CIP 109841 / QLW-P1DMWA-1) (Polynucleobacter necessarius subsp. asymbioticus).